A 234-amino-acid chain; its full sequence is Eukaryotic translation initiation factor 3 subunit K (234 aa).

In terms of domain architecture, PCI spans 46–219 (SDIEANLALL…EAKPATTTES (174 aa)).

Belongs to the eIF-3 subunit K family. As to quaternary structure, component of the eukaryotic translation initiation factor 3 (eIF-3) complex.

The protein resides in the cytoplasm. Functionally, component of the eukaryotic translation initiation factor 3 (eIF-3) complex, which is involved in protein synthesis of a specialized repertoire of mRNAs and, together with other initiation factors, stimulates binding of mRNA and methionyl-tRNAi to the 40S ribosome. The eIF-3 complex specifically targets and initiates translation of a subset of mRNAs involved in cell proliferation. This is Eukaryotic translation initiation factor 3 subunit K from Yarrowia lipolytica (strain CLIB 122 / E 150) (Yeast).